The primary structure comprises 124 residues: Small ribosomal subunit protein uS12 (124 aa).

The segment at Met1–Gly32 is disordered. The residue at position 89 (Asp89) is a 3-methylthioaspartic acid. The interval Thr104–Ser124 is disordered. Residues Lys108–Gly118 show a composition bias toward basic residues.

The protein belongs to the universal ribosomal protein uS12 family. As to quaternary structure, part of the 30S ribosomal subunit. Contacts proteins S8 and S17. May interact with IF1 in the 30S initiation complex.

In terms of biological role, with S4 and S5 plays an important role in translational accuracy. Interacts with and stabilizes bases of the 16S rRNA that are involved in tRNA selection in the A site and with the mRNA backbone. Located at the interface of the 30S and 50S subunits, it traverses the body of the 30S subunit contacting proteins on the other side and probably holding the rRNA structure together. The combined cluster of proteins S8, S12 and S17 appears to hold together the shoulder and platform of the 30S subunit. The sequence is that of Small ribosomal subunit protein uS12 from Rhodococcus jostii (strain RHA1).